We begin with the raw amino-acid sequence, 96 residues long: Translation initiation factor 1A 1 (96 aa).

In terms of domain architecture, S1-like spans 8–82; sequence GSHDLRMPDD…EKGDITWRYE (75 aa).

It belongs to the eIF-1A family.

In terms of biological role, seems to be required for maximal rate of protein biosynthesis. Enhances ribosome dissociation into subunits and stabilizes the binding of the initiator Met-tRNA(I) to 40 S ribosomal subunits. The polypeptide is Translation initiation factor 1A 1 (Haloquadratum walsbyi (strain DSM 16790 / HBSQ001)).